The sequence spans 192 residues: Ribosomal RNA large subunit methyltransferase E (192 aa).

G46, W48, D63, D79, and D102 together coordinate S-adenosyl-L-methionine. K142 functions as the Proton acceptor in the catalytic mechanism.

This sequence belongs to the class I-like SAM-binding methyltransferase superfamily. RNA methyltransferase RlmE family.

It localises to the cytoplasm. The catalysed reaction is uridine(2552) in 23S rRNA + S-adenosyl-L-methionine = 2'-O-methyluridine(2552) in 23S rRNA + S-adenosyl-L-homocysteine + H(+). In terms of biological role, specifically methylates the uridine in position 2552 of 23S rRNA at the 2'-O position of the ribose in the fully assembled 50S ribosomal subunit. The polypeptide is Ribosomal RNA large subunit methyltransferase E (Wolbachia pipientis wMel).